A 319-amino-acid polypeptide reads, in one-letter code: Ribonucleoside-diphosphate reductase small chain (319 aa).

Positions 70, 101, and 104 each coordinate Fe cation. Tyr-108 is an active-site residue. Fe cation contacts are provided by Glu-163, Glu-197, and His-200. The interaction with R1 stretch occupies residues 313-319; the sequence is FSLDVDF.

This sequence belongs to the ribonucleoside diphosphate reductase small chain family. In terms of assembly, interacts with RNR1/OPG080 subunit. Can interact with host RNR1 supunit. Requires Fe cation as cofactor.

It carries out the reaction a 2'-deoxyribonucleoside 5'-diphosphate + [thioredoxin]-disulfide + H2O = a ribonucleoside 5'-diphosphate + [thioredoxin]-dithiol. Its function is as follows. Ribonucleoside-diphosphate reductase holoenzyme provides the precursors necessary for viral DNA synthesis. Allows virus growth in non-dividing cells. Catalyzes the biosynthesis of deoxyribonucleotides from the corresponding ribonucleotides. This Bos taurus (Bovine) protein is Ribonucleoside-diphosphate reductase small chain (OPG048).